We begin with the raw amino-acid sequence, 365 residues long: MTAPADTVHPAGQPDYVAQVATVPFRLGRPEELPGTLDELRAAVSARAGEAVRGLNRPGARTDLAALLAATERTRAALAPVGAGPVGDDPSESEANRDNDLAFGIVRTRGPVAELLVDAALAALAGILEVAVDRGSDLEDAAWQRFIGGFDALLGWLADPHSAPRPATVPGAGPAGPPVHQDALRRWVRGHHVFMVLAQGCALATACLRDSAARGDLPGAEASAAAAEALMRGCQGALLYAGDANREQYNEQIRPTLMPPVAPPKMSGLHWRDHEVLIKELAGSRDAWEWLSAQGSERPATFRAALAETYDSHIGVCGHFVGDQSPSLLAAQGSTRSAVGVIGQFRKIRLSALPEQPATQQGEPS.

313–317 contributes to the heme binding site; sequence HIGVC.

It depends on heme as a cofactor.

It catalyses the reaction 3-methyl-L-tyrosine + H2O2 = 5-hydroxy-3-methyl-L-tyrosine + H2O. Its pathway is antibiotic biosynthesis. Its function is as follows. Heme-containing peroxygenase that mediates the hydroxylation of 3-methyl-L-tyrosine (3-Me-Tyr) into 3-hydroxy-5-methyl-L-tyrosine (3-OH-5-Me-Tyr) in biosynthesis of saframycin A, a potent antitumor antibiotic that belongs to the tetrahydroisoquinoline family. Involved in biosynthesis of 3-hydroxy-5-methyl-O-methyltyrosine (3-OH-5-Me-OMe-Tyr), a core structure of saframycin A. The sequence is that of 3-methyl-L-tyrosine peroxygenase from Streptomyces lavendulae.